An 838-amino-acid chain; its full sequence is Polyribonucleotide nucleotidyltransferase (838 aa).

Residues aspartate 494 and aspartate 500 each contribute to the Mg(2+) site. The KH domain occupies 561-620 (PRMESMLIDKGKIKNVIGAGGKNVREICEKTGAKIEISQDGTVMIYAVGREAIESAKDMI). An S1 motif domain is found at 630 to 697 (GKIYSGEVCE…DKDHIQLSMR (68 aa)). The segment covering 747 to 757 (GGASAGRNGRG) has biased composition (gly residues). Positions 747–838 (GGASAGRNGR…PAAPKKPRFF (92 aa)) are disordered. Over residues 788–810 (AGSSGYSSDSSSGNTKSSSSESS) the composition is skewed to low complexity. The segment covering 811-820 (GGTGGRGRNG) has biased composition (gly residues).

The protein belongs to the polyribonucleotide nucleotidyltransferase family. The cofactor is Mg(2+).

The protein localises to the cytoplasm. It catalyses the reaction RNA(n+1) + phosphate = RNA(n) + a ribonucleoside 5'-diphosphate. Its function is as follows. Involved in mRNA degradation. Catalyzes the phosphorolysis of single-stranded polyribonucleotides processively in the 3'- to 5'-direction. The protein is Polyribonucleotide nucleotidyltransferase of Anaplasma phagocytophilum (strain HZ).